A 544-amino-acid chain; its full sequence is Membrane protein insertase YidC (544 aa).

Residues 29–58 (TPKADPSATTQTLNPTSSESEDYVPTSSDS) form a disordered region. Residues 35–46 (SATTQTLNPTSS) show a composition bias toward polar residues. Transmembrane regions (helical) follow at residues 341 to 361 (FVLLKWLHSILGNWGVAIIAI), 421 to 441 (GGCFPILLQMPIFLALFYVFL), and 499 to 519 (PVIFSVFFLWFPSGLVLYWLV).

The protein belongs to the OXA1/ALB3/YidC family. Type 1 subfamily. Interacts with the Sec translocase complex via SecD. Specifically interacts with transmembrane segments of nascent integral membrane proteins during membrane integration.

It localises to the cell inner membrane. Required for the insertion and/or proper folding and/or complex formation of integral membrane proteins into the membrane. Involved in integration of membrane proteins that insert both dependently and independently of the Sec translocase complex, as well as at least some lipoproteins. Aids folding of multispanning membrane proteins. The polypeptide is Membrane protein insertase YidC (Pseudoalteromonas translucida (strain TAC 125)).